Consider the following 920-residue polypeptide: MADQSLLHSPINPHFFQPILTESRTHLNIPVAFFSKHVEGRNNQNKTVTLRSDASDKTWLVKMDGLKLTDGWEDFAFAHDLRTGDIVVFRLEGEMVFHVTALGPSCCEIQYHTSSHNINDDDRNDQINIASRNSSRVKKNPRKKVESSLDHSRFVAKVSAWCLSNDRLYIPLSFARLNGLNKINSKKIYLQNEEGRSWKLVLRHDKSGMQTFVQSGWRRFCSENGIRQGQYTFKLVRKSAPPVIRLCRAKAKPKQRSVAEYSSDHSCFEGSVTPSSLRNDLLYLPRSFVNSNRLDKRCSEIVLKNEQGVKWPLVLKRFKSVTYLPKGWTSFCQVNRIKAGDSFKFKLVGTWKKPVLSLCPTQSNNHKTPLECSEGNKSEESEEDCLEVKKKKYWSRCRASVENMDDDQTNIGNSSRKKRVSKNPREKVESSSDHSSFVGSVNPSSLYKDQLYLPRNFVSSNFLDKRCSEIVLKNERGEKRTLVLKHFKKDLTFLKKGWTSFCQVNRIKAGDSFKFKLVGTWNKPVLSLCPTETNYHKTPLACSEGNKSEESEEEGTEDKNTSQDCLEVKKRKYWSTCRASAENIDDDQTNIGNSSKEKRVKKNPVKKAESSSDHSSFVANVTASSLNYDRLYLPLSFVSSNGLDKMNGKEIVLLNEEGLSWKFNLKYNQAGKHTYVRPGWSRFCDANGMSQGQQFTFKLVQKHGPPVMYLSLSEHRPKSESSSHRSYFVGSVTASSIKKDKLYLWKSFVSSNGLDKGCKKIILKNKWGREWKLVLKHYKSNCFTIIKRGWTSFCQGNGLKAGDSFKFKLVGTGEKPVLSLCPAESSHEKIPLECPEGIDDVNSLSSNPSSGDDSSRSEESEEENMEDKNISQDCLETKKRKYCSSSSYSQNRFVTLTLTRSAFQTYKLVSFFNNYASRLS.

3 DNA-binding regions (TF-B3) span residues 12–105 (NPHF…LGPS), 153–250 (RFVA…CRAK), and 267–361 (CFEG…LCPT). 3 disordered regions span residues 405–438 (DDDQ…SSFV), 540–562 (LACS…KNTS), and 585–614 (DDDQ…SSDH). The span at 423 to 432 (NPREKVESSS) shows a compositional bias: basic and acidic residues. Residues 436–531 (SFVGSVNPSS…NKPVLSLCPT (96 aa)) constitute a DNA-binding region (TF-B3 4). 2 consecutive DNA-binding regions (TF-B3) follow at residues 616-714 (SFVA…SLSE) and 727-823 (YFVG…LCPA). Over residues 842 to 852 (NSLSSNPSSGD) the composition is skewed to low complexity. Positions 842-870 (NSLSSNPSSGDDSSRSEESEEENMEDKNI) are disordered.

The protein resides in the nucleus. This chain is B3 domain-containing protein REM17 (REM17), found in Arabidopsis thaliana (Mouse-ear cress).